A 467-amino-acid chain; its full sequence is Adenosylhomocysteinase (467 aa).

T68, D144, and E169 together coordinate substrate. Residue 170–172 (TTT) coordinates NAD(+). Residues K199 and D203 each coordinate substrate. NAD(+) is bound by residues N204, 233 to 238 (GYGDVG), E256, N305, 326 to 328 (IGH), and N373.

It belongs to the adenosylhomocysteinase family. Requires NAD(+) as cofactor.

It localises to the cytoplasm. It catalyses the reaction S-adenosyl-L-homocysteine + H2O = L-homocysteine + adenosine. It participates in amino-acid biosynthesis; L-homocysteine biosynthesis; L-homocysteine from S-adenosyl-L-homocysteine: step 1/1. May play a key role in the regulation of the intracellular concentration of adenosylhomocysteine. The chain is Adenosylhomocysteinase from Acinetobacter baylyi (strain ATCC 33305 / BD413 / ADP1).